The chain runs to 213 residues: Tellurium resistance protein TerX (213 aa).

Belongs to the CAPAB/TerDEXZ family.

Not known; seems to contribute to the tellurium resistance (Ter) mechanism. Also involved in phage inhibition (Phi) and colicin resistance (PacB). The sequence is that of Tellurium resistance protein TerX (terX) from Serratia marcescens.